The chain runs to 265 residues: TATA-box-binding protein (265 aa).

The segment at 1 to 40 is disordered; it reads MYNPSQAVPVSLHKNQDNQDGGQQRSHYPQISSQQSQSYL. The segment covering 18-29 has biased composition (polar residues); the sequence is NQDGGQQRSHYP. A run of 2 repeats spans residues 91–167 and 181–258.

The protein belongs to the TBP family. As to quaternary structure, belongs to the TFIID complex together with the TBP-associated factors (TAFs). Binds DNA as monomer.

The protein localises to the nucleus. In terms of biological role, general transcription factor that functions at the core of the DNA-binding multiprotein factor TFIID. Binding of TFIID to the TATA box is the initial transcriptional step of the pre-initiation complex (PIC), playing a role in the activation of eukaryotic genes transcribed by RNA polymerase II. In Strongylocentrotus purpuratus (Purple sea urchin), this protein is TATA-box-binding protein.